The chain runs to 340 residues: Ferredoxin--NADP reductase (340 aa).

The FAD site is built by D33, Q41, Y46, A86, F120, D286, and T327.

It belongs to the ferredoxin--NADP reductase type 2 family. In terms of assembly, homodimer. FAD serves as cofactor.

It catalyses the reaction 2 reduced [2Fe-2S]-[ferredoxin] + NADP(+) + H(+) = 2 oxidized [2Fe-2S]-[ferredoxin] + NADPH. The protein is Ferredoxin--NADP reductase of Rickettsia conorii (strain ATCC VR-613 / Malish 7).